A 132-amino-acid chain; its full sequence is UPF0299 membrane protein YohJ (132 aa).

The Periplasmic portion of the chain corresponds to 1–6 (MSKTLN). The chain crosses the membrane as a helical span at residues 7–27 (IIWQYLRAFVLIYACLYAGIF). Residues 28–30 (IAS) lie on the Cytoplasmic side of the membrane. A helical membrane pass occupies residues 31-51 (LLPVTIPGSIIGMLILFVLLA). Residues 52–62 (LQILPAKWVNP) are Periplasmic-facing. A helical transmembrane segment spans residues 63–83 (GCYVLIRYMALLFVPIGVGVM). The Cytoplasmic portion of the chain corresponds to 84–92 (QYFDLLRAQ). A helical membrane pass occupies residues 93-113 (FGPVVVSCAISTLVVFLVVSW). The Periplasmic segment spans residues 114-132 (SSQLVHGERKVVGQKGSEE).

The protein belongs to the UPF0299 family.

The protein resides in the cell inner membrane. In Escherichia coli O157:H7, this protein is UPF0299 membrane protein YohJ (yohJ).